The sequence spans 471 residues: Microtubule-associated tyrosine carboxypeptidase 1 (471 aa).

Disordered regions lie at residues 1 to 40 (MVLDSGAQAYDQAPPSPPTSPPSLRHRLKPSDRDGPPLYP) and 76 to 116 (HMRR…LRPA). Residue H280 participates in Zn(2+) binding. The Nucleophile role is filled by E281. Residues H285 and E316 each coordinate Zn(2+).

This sequence belongs to the peptidase MATCAP family. The cofactor is Zn(2+).

It is found in the cytoplasm. It localises to the cytoskeleton. It catalyses the reaction C-terminal L-alpha-aminoacyl-L-glutamyl-L-glutamyl-L-tyrosyl-[tubulin] + H2O = C-terminal L-alpha-aminoacyl-L-glutamyl-L-glutamyl-[tubulin] + L-tyrosine. The enzyme catalyses C-terminal L-alpha-aminoacyl-L-glutamyl-L-glutamyl-L-phenylalanyl-[tubulin] + H2O = C-terminal L-alpha-aminoacyl-L-glutamyl-L-glutamyl-[tubulin] + L-phenylalanine. In terms of biological role, tyrosine carboxypeptidase that removes the C-terminal tyrosine residue of alpha-tubulin, thereby regulating microtubule dynamics and function. Also able to remove the C-terminal phenylalanine residue of alpha-tubulin TUBA8. Recognizes adjacent tubulin dimers along the same protofilament. The protein is Microtubule-associated tyrosine carboxypeptidase 1 of Homo sapiens (Human).